A 227-amino-acid polypeptide reads, in one-letter code: MDSDTPPLIVDIDGTLTDESRALDPHVIPVLREWPARVVIATGKAMPFPIALCEFLGLDRTVVAENGGVVFVEATDELRLEGDHEAALAVGESYRDLGHDLGFGQIDLANRWRETELVVSLDQPLEPLEELAAARGLVVLDTGFAYHVTDPVVDKGTGLEAVCSELDLDPAEFLAVGDSVNDAQMFDLAGEAVAVANADETALERADRVTDASYGDGFLEAVAPYRD.

The active-site Nucleophile is D11. Mg(2+)-binding residues include D11 and D13. Residue K155 coordinates substrate. Residues D178 and D182 each contribute to the Mg(2+) site.

This sequence belongs to the archaeal SPP-like hydrolase family. Requires Mg(2+) as cofactor.

It carries out the reaction 2-phosphoglycolate + H2O = glycolate + phosphate. Its function is as follows. Catalyzes the dephosphorylation of 2-phosphoglycolate. The protein is Phosphoglycolate phosphatase of Haloarcula marismortui (strain ATCC 43049 / DSM 3752 / JCM 8966 / VKM B-1809) (Halobacterium marismortui).